The following is a 302-amino-acid chain: 1D-myo-inositol 2-acetamido-2-deoxy-alpha-D-glucopyranoside deacetylase (302 aa).

Histidine 12, aspartate 15, and histidine 147 together coordinate Zn(2+).

This sequence belongs to the MshB deacetylase family. The cofactor is Zn(2+).

The enzyme catalyses 1D-myo-inositol 2-acetamido-2-deoxy-alpha-D-glucopyranoside + H2O = 1D-myo-inositol 2-amino-2-deoxy-alpha-D-glucopyranoside + acetate. Functionally, catalyzes the deacetylation of 1D-myo-inositol 2-acetamido-2-deoxy-alpha-D-glucopyranoside (GlcNAc-Ins) in the mycothiol biosynthesis pathway. The polypeptide is 1D-myo-inositol 2-acetamido-2-deoxy-alpha-D-glucopyranoside deacetylase (Thermobispora bispora (strain ATCC 19993 / DSM 43833 / CBS 139.67 / JCM 10125 / KCTC 9307 / NBRC 14880 / R51)).